The sequence spans 97 residues: Insertion element IS2 uncharacterized 11.1 kDa protein (97 aa).

This Escherichia coli protein is Insertion element IS2 uncharacterized 11.1 kDa protein.